Consider the following 145-residue polypeptide: D-aminoacyl-tRNA deacylase (145 aa).

The short motif at 137 to 138 (GP) is the Gly-cisPro motif, important for rejection of L-amino acids element.

The protein belongs to the DTD family. Homodimer.

Its subcellular location is the cytoplasm. It catalyses the reaction glycyl-tRNA(Ala) + H2O = tRNA(Ala) + glycine + H(+). It carries out the reaction a D-aminoacyl-tRNA + H2O = a tRNA + a D-alpha-amino acid + H(+). An aminoacyl-tRNA editing enzyme that deacylates mischarged D-aminoacyl-tRNAs. Also deacylates mischarged glycyl-tRNA(Ala), protecting cells against glycine mischarging by AlaRS. Acts via tRNA-based rather than protein-based catalysis; rejects L-amino acids rather than detecting D-amino acids in the active site. By recycling D-aminoacyl-tRNA to D-amino acids and free tRNA molecules, this enzyme counteracts the toxicity associated with the formation of D-aminoacyl-tRNA entities in vivo and helps enforce protein L-homochirality. The polypeptide is D-aminoacyl-tRNA deacylase (Deinococcus radiodurans (strain ATCC 13939 / DSM 20539 / JCM 16871 / CCUG 27074 / LMG 4051 / NBRC 15346 / NCIMB 9279 / VKM B-1422 / R1)).